Here is a 378-residue protein sequence, read N- to C-terminus: Chaperone protein DnaJ (378 aa).

Residues 5–70 enclose the J domain; that stretch reads DYYEVLGVAK…QKRAAYDQYG (66 aa). The segment at 138-216 adopts a CR-type zinc-finger fold; that stretch reads GYDTQIRVPS…CHGSGKVKET (79 aa). Zn(2+) is bound by residues C151, C154, C168, C171, C190, C193, C204, and C207. CXXCXGXG motif repeat units lie at residues 151 to 158, 168 to 175, 190 to 197, and 204 to 211; these read CEVCHGSG, CPTCHGQG, CPKCHGTG, and CAHCHGSG.

This sequence belongs to the DnaJ family. In terms of assembly, homodimer. Requires Zn(2+) as cofactor.

It is found in the cytoplasm. Its function is as follows. Participates actively in the response to hyperosmotic and heat shock by preventing the aggregation of stress-denatured proteins and by disaggregating proteins, also in an autonomous, DnaK-independent fashion. Unfolded proteins bind initially to DnaJ; upon interaction with the DnaJ-bound protein, DnaK hydrolyzes its bound ATP, resulting in the formation of a stable complex. GrpE releases ADP from DnaK; ATP binding to DnaK triggers the release of the substrate protein, thus completing the reaction cycle. Several rounds of ATP-dependent interactions between DnaJ, DnaK and GrpE are required for fully efficient folding. Also involved, together with DnaK and GrpE, in the DNA replication of plasmids through activation of initiation proteins. This Burkholderia cenocepacia (strain HI2424) protein is Chaperone protein DnaJ.